The sequence spans 549 residues: Glucose-6-phosphate isomerase (549 aa).

N6-acetyllysine occurs at positions 80, 228, and 234. The active-site Proton donor is the glutamate 355. Active-site residues include histidine 386 and lysine 514.

The protein belongs to the GPI family.

It is found in the cytoplasm. The enzyme catalyses alpha-D-glucose 6-phosphate = beta-D-fructose 6-phosphate. It functions in the pathway carbohydrate biosynthesis; gluconeogenesis. The protein operates within carbohydrate degradation; glycolysis; D-glyceraldehyde 3-phosphate and glycerone phosphate from D-glucose: step 2/4. In terms of biological role, catalyzes the reversible isomerization of glucose-6-phosphate to fructose-6-phosphate. This chain is Glucose-6-phosphate isomerase, found in Escherichia coli O17:K52:H18 (strain UMN026 / ExPEC).